The following is a 153-amino-acid chain: Aspartate carbamoyltransferase regulatory chain (153 aa).

C110, C115, C138, and C141 together coordinate Zn(2+).

Belongs to the PyrI family. As to quaternary structure, contains catalytic and regulatory chains. The cofactor is Zn(2+).

Functionally, involved in allosteric regulation of aspartate carbamoyltransferase. The chain is Aspartate carbamoyltransferase regulatory chain from Bacteroides thetaiotaomicron (strain ATCC 29148 / DSM 2079 / JCM 5827 / CCUG 10774 / NCTC 10582 / VPI-5482 / E50).